An 804-amino-acid chain; its full sequence is Probable replication endonuclease from prophage-like region 1 (804 aa).

Active-site O-(5'-phospho-DNA)-tyrosine intermediate residues include Y498 and Y502.

This sequence belongs to the phage GPA family.

Functionally, possible endonuclease which induces a single-strand cut and initiates DNA replication. This Salmonella typhi protein is Probable replication endonuclease from prophage-like region 1.